A 385-amino-acid chain; its full sequence is Cytochrome b (385 aa).

The next 4 helical transmembrane spans lie at 32 to 52, 76 to 98, 113 to 133, and 179 to 199; these read FGSLLALCLGIQIVTGVTLAM, WLVRYLHANTASAFFFLVYLHIG, TWAIGTVILIVMMATAFLGYV, and FFALHFLLPFVLAALALMHLI. Heme b is bound by residues histidine 82 and histidine 96. Residues histidine 183 and histidine 197 each contribute to the heme b site. Residue histidine 202 participates in a ubiquinone binding. The next 4 membrane-spanning stretches (helical) occupy residues 226–246, 290–310, 322–342, and 349–369; these read FIFKDLVTIFIFFIVLSIFVF, LLGVIAMFSAILALMVMPITD, LSKVAFYIFVANFLVLMQIGA, and FIELGQISTVLYFAHFFVIVP.

This sequence belongs to the cytochrome b family. As to quaternary structure, fungal cytochrome b-c1 complex contains 10 subunits; 3 respiratory subunits, 2 core proteins and 5 low-molecular weight proteins. Cytochrome b-c1 complex is a homodimer. Heme b is required as a cofactor.

It localises to the mitochondrion inner membrane. Component of the ubiquinol-cytochrome c reductase complex (complex III or cytochrome b-c1 complex) that is part of the mitochondrial respiratory chain. The b-c1 complex mediates electron transfer from ubiquinol to cytochrome c. Contributes to the generation of a proton gradient across the mitochondrial membrane that is then used for ATP synthesis. This chain is Cytochrome b (cob), found in Aspergillus tubingensis.